A 260-amino-acid polypeptide reads, in one-letter code: MSGRLIGKVALVSGGARGMGASHVRAMVAEGAKVVFGDILDEEGKAVAAELADAARYVHLDVTQPAQWTAAVDTAVTAFGGLHVLVNNAGILNIGTIEDYALTEWQRILDVNLTGVFLGIRAVVKPMKEAGRGSIINISSIEGLAGTVACHGYTATKFAVRGLTKSTALELGPGGIRVNSIHPGLVKTPMTDWVPEDIFQTALGRAAEPVEVSNLVVYLASDESSYSTGAEFVVDGGTVAGLAHNDFGAVEVSSQPEWVT.

NAD(+)-binding residues include Arg17, Met19, Asp38, Asp61, Val62, Asn88, Tyr153, Lys157, Val186, Thr188, and Thr191. The active-site Proton acceptor is Tyr153.

This sequence belongs to the short-chain dehydrogenases/reductases (SDR) family. In terms of assembly, homotetramer.

The enzyme catalyses androstan-3alpha,17beta-diol + NAD(+) = 17beta-hydroxyandrostanone + NADH + H(+). It functions in the pathway lipid metabolism; steroid degradation. In terms of biological role, probably involved in steroid metabolism. This chain is 3-alpha-(or 20-beta)-hydroxysteroid dehydrogenase (fabG3), found in Mycobacterium tuberculosis (strain CDC 1551 / Oshkosh).